Consider the following 438-residue polypeptide: tRNA-2-methylthio-N(6)-dimethylallyladenosine synthase (438 aa).

An MTTase N-terminal domain is found at 3 to 123 (KRLFVKTYGC…LPEMVAQAAR (121 aa)). Residues cysteine 12, cysteine 48, cysteine 86, cysteine 160, cysteine 164, and cysteine 167 each coordinate [4Fe-4S] cluster. Residues 146-374 (HAEGTSAFLS…QALLLDQTMR (229 aa)) enclose the Radical SAM core domain. One can recognise a TRAM domain in the interval 377-438 (HACVGREMRI…HPNSLEAVPA (62 aa)).

This sequence belongs to the methylthiotransferase family. MiaB subfamily. As to quaternary structure, monomer. The cofactor is [4Fe-4S] cluster.

It localises to the cytoplasm. It carries out the reaction N(6)-dimethylallyladenosine(37) in tRNA + (sulfur carrier)-SH + AH2 + 2 S-adenosyl-L-methionine = 2-methylsulfanyl-N(6)-dimethylallyladenosine(37) in tRNA + (sulfur carrier)-H + 5'-deoxyadenosine + L-methionine + A + S-adenosyl-L-homocysteine + 2 H(+). Catalyzes the methylthiolation of N6-(dimethylallyl)adenosine (i(6)A), leading to the formation of 2-methylthio-N6-(dimethylallyl)adenosine (ms(2)i(6)A) at position 37 in tRNAs that read codons beginning with uridine. This chain is tRNA-2-methylthio-N(6)-dimethylallyladenosine synthase, found in Paramagnetospirillum magneticum (strain ATCC 700264 / AMB-1) (Magnetospirillum magneticum).